The sequence spans 269 residues: C-type lectin domain family 2 member G (269 aa).

At methionine 1–cysteine 107 the chain is on the cytoplasmic side. Residues cysteine 108–alanine 128 form a helical; Signal-anchor for type II membrane protein membrane-spanning segment. Residues threonine 129–valine 269 lie on the Extracellular side of the membrane. One can recognise a C-type lectin domain in the interval valine 150 to serine 254. An N-linked (GlcNAc...) asparagine glycan is attached at asparagine 163. Cysteine 171 and cysteine 253 form a disulfide bridge.

Detected in vagina, eye, tongue, stomach and spleen.

It localises to the cell membrane. In terms of biological role, inhibits osteoclast formation. The sequence is that of C-type lectin domain family 2 member G (Clec2g) from Mus musculus (Mouse).